The sequence spans 373 residues: Nodulation protein NolL (373 aa).

9 consecutive transmembrane segments (helical) span residues 27-47 (DFAKGILITLVIIGHLLQYLI), 62-82 (SIYMFHMPLFMAISGYLSSGA), 98-118 (QLLLPMLFWCTLIWTLKSAVI), 140-160 (WFIWAAFISFILIRVLTTFNR), 164-184 (WIISASAIAVAFAPITLSITP), 212-232 (RYKWIFVVLLSIAAFICFLGW), 253-273 (QVFLMFSGSLAASAVAMQSMF), 286-306 (RFVAVQLGQSTLLLYLVQGAV), and 324-344 (RITFATVLGVAIVVIAMAIRS).

It belongs to the acyltransferase 3 family.

It is found in the cell membrane. Thought to be an acetyltransferase that modifies the fucose of the nod factor. The protein is Nodulation protein NolL (nolL) of Mesorhizobium japonicum (strain LMG 29417 / CECT 9101 / MAFF 303099) (Mesorhizobium loti (strain MAFF 303099)).